Consider the following 186-residue polypeptide: Bis(5'-nucleosyl)-tetraphosphatase, symmetrical (186 aa).

The HD domain occupies 18 to 132 (RYIHTVGVMN…IYVADYIEPN (115 aa)). ADP is bound at residue histidine 21. Fe cation-binding residues include histidine 21, histidine 50, and aspartate 51. ADP-binding positions include 51 to 54 (DYAK), histidine 83, 109 to 110 (HT), aspartate 127, arginine 133, and 170 to 175 (PVFPDT). Aspartate 127 lines the Fe cation pocket.

The protein belongs to the Ap4A hydrolase YqeK family. As to quaternary structure, homodimer.

The enzyme catalyses P(1),P(4)-bis(5'-adenosyl) tetraphosphate + H2O = 2 ADP + 2 H(+). In terms of biological role, hydrolyzes diadenosine 5',5'''-P1,P4-tetraphosphate (Ap4A) to yield ADP. In Bacillus subtilis (strain 168), this protein is Bis(5'-nucleosyl)-tetraphosphatase, symmetrical (yqeK).